Consider the following 41-residue polypeptide: Hadrurin (41 aa).

Belongs to the non-disulfide-bridged peptide (NDBP) superfamily. Long chain multifunctional peptide (group 2) family. Expressed by the venom gland.

The protein localises to the secreted. Antimicrobial activity against S.typhimurium, K.pneumoniae, E.cloacae, P.aeruginosa, E.coli and S.marcescens. Also shows hemolytic activity when tested in human erythrocytes. The polypeptide is Hadrurin (Hoffmannihadrurus aztecus (Mexican scorpion)).